We begin with the raw amino-acid sequence, 161 residues long: 18.3 kDa class I heat shock protein (161 aa).

The 114-residue stretch at 48-161 (ETAAFANARI…KPQVKAINVY (114 aa)) folds into the sHSP domain.

Belongs to the small heat shock protein (HSP20) family. As to quaternary structure, forms oligomeric structures.

It localises to the cytoplasm. The polypeptide is 18.3 kDa class I heat shock protein (HSP18) (Oxybasis rubra (Red goosefoot)).